The chain runs to 358 residues: Na(+)/H(+) exchange regulatory cofactor NHE-RF1 (358 aa).

An N-acetylserine modification is found at Ser-2. Phosphoserine is present on residues Ser-2 and Ser-46. The 81-residue stretch at 14–94 folds into the PDZ 1 domain; the sequence is LCCLEKGPNG…AVRLLVVDPE (81 aa). A compositionally biased stretch (low complexity) spans 114 to 134; sequence QETPGQAEPAAAAEAQGAGNE. Disordered stretches follow at residues 114–192 and 269–358; these read QETP…EASG and SREA…FSNL. Positions 135-149 are enriched in basic and acidic residues; the sequence is NEPREADKSHPEQRK. A PDZ 2 domain is found at 154 to 234; it reads LCTMKKGPSG…ETKLLVVDRE (81 aa). Ser-162, Ser-269, Ser-280, Ser-290, and Ser-291 each carry phosphoserine. A compositionally biased stretch (polar residues) spans 287-306; the sequence is RSASSDTSEELNSQDSPPKQ. Position 293 is a phosphothreonine (Thr-293). A phosphoserine mark is found at Ser-294, Ser-299, and Ser-302. Residues 307 to 319 show a composition bias toward low complexity; the sequence is DSTAPSSTSSSDP. Residues 348–358 are compositionally biased toward basic and acidic residues; sequence WSKKNELFSNL.

As to quaternary structure, homodimer, and heterodimer with NHERF2. Binds the N-termini of EZR, RDX and MSN. Binds the C-termini of PDGFRA, PDGFRB, ADRB2, NOS2 and CFTR. Binds ARHGAP17, EPI64, RACK1, OPRK1, GNAQ, CTNNB1 and PLCB3. Binds PDZK1. Interacts with CLCN3. Binds the C-terminus of PAG1. In resting T-cells, part of a PAG1-NHERF1-MSN complex which is disrupted upon TCR activation. Forms a complex with CFTR and SLC4A7. Forms a complex with SLC4A7 and ATP6V1B1. Interacts with TRPC4 (via the PDZ-binding domain). Directly interacts with HTR4. Interacts (via the PDZ 1 domain) with PODXL (via the C-terminal PDZ-binding motif DTHL); interaction is not detected in glomerular epithelium cells. Interacts (via the PDZ 1 domain) with PODXL (via the C-terminal PDZ-binding motif DTHL); the interaction take place early in the secretory pathway and is necessary for its apical membrane sorting. Interacts with SLC26A3. Interacts with MCC. Interacts with SLC34A1. Interacts (via the PDZ domains) with SLC26A6 isoform 4 and isoform 5. Interacts (via PDZ domains) with ACE2 (via PDZ-binding motif); the interaction may enhance ACE2 membrane residence. In terms of processing, phosphorylated on serine residues.

The protein resides in the cytoplasm. The protein localises to the apical cell membrane. Its subcellular location is the endomembrane system. It is found in the cell projection. It localises to the filopodium. The protein resides in the ruffle. The protein localises to the microvillus. In terms of biological role, scaffold protein that connects plasma membrane proteins with members of the ezrin/moesin/radixin family and thereby helps to link them to the actin cytoskeleton and to regulate their surface expression. Necessary for recycling of internalized ADRB2. Was first known to play a role in the regulation of the activity and subcellular location of SLC9A3. Necessary for cAMP-mediated phosphorylation and inhibition of SLC9A3. Involved in sperm capacitation. May participate in the regulation of the chloride and bicarbonate homeostasis in spermatozoa. May enhance Wnt signaling. May participate in HTR4 targeting to microvilli. Involved in the regulation of phosphate reabsorption in the renal proximal tubules. The protein is Na(+)/H(+) exchange regulatory cofactor NHE-RF1 (NHERF1) of Macaca fascicularis (Crab-eating macaque).